Reading from the N-terminus, the 301-residue chain is Hydroxymycolate synthase MmaA4 (301 aa).

S-adenosyl-L-methionine-binding positions include 42–43, 81–83, 103–108, 132–133, and Ile145; these read YS, GCG, TLSKNQ, and WE. Cys278 is an active-site residue.

This sequence belongs to the CFA/CMAS family. In terms of assembly, monomer.

It functions in the pathway lipid metabolism; mycolic acid biosynthesis. Functionally, involved in the biosynthesis of hydroxymycolate, a common precursor of oxygenated mycolic acids (methoxymycolate and ketomycolate). Probably transfers a methyl group from the S-adenosylmethionine (SAM) cofactor and, subsequently or simultaneously, a water molecule onto the double bound of ethylene substrates, leading to the formation of the hydroxylated product at the distal position. The sequence is that of Hydroxymycolate synthase MmaA4 (cmaA) from Mycobacterium bovis (strain ATCC BAA-935 / AF2122/97).